A 784-amino-acid polypeptide reads, in one-letter code: Lon protease (784 aa).

A Lon N-terminal domain is found at 11 to 204 (IPVLPLRDVV…YLMAMMESEI (194 aa)). 356-363 (GPPGVGKT) contacts ATP. Residues 592–773 (ENRVGQVTGL…EEVLTLALQN (182 aa)) enclose the Lon proteolytic domain. Residues Ser-679 and Lys-722 contribute to the active site.

Belongs to the peptidase S16 family. As to quaternary structure, homohexamer. Organized in a ring with a central cavity. ATP binding and hydrolysis do not affect the oligomeric state of the enzyme.

Its subcellular location is the cytoplasm. It catalyses the reaction Hydrolysis of proteins in presence of ATP.. Its activity is regulated as follows. Contains an allosteric site (distinct from its active site), whose occupancy by an unfolded polypeptide leads to enzyme activation. Functionally, ATP-dependent serine protease that mediates the selective degradation of mutant and abnormal proteins as well as certain short-lived regulatory proteins. Required for cellular homeostasis and for survival from DNA damage and developmental changes induced by stress. Degrades polypeptides processively to yield small peptide fragments that are 5 to 10 amino acids long. Binds to DNA in a double-stranded, site-specific manner. Endogenous substrates include the regulatory proteins RcsA and SulA, the transcriptional activator SoxS, and UmuD. Its overproduction specifically inhibits translation through at least two different pathways, one of them being the YoeB-YefM toxin-antitoxin system. The polypeptide is Lon protease (Escherichia coli O6:H1 (strain CFT073 / ATCC 700928 / UPEC)).